The sequence spans 182 residues: CDP-diacylglycerol--glycerol-3-phosphate 3-phosphatidyltransferase (182 aa).

Residues 2–12 (QFNIPTLLTLF) are Cytoplasmic-facing. A helical membrane pass occupies residues 13 to 37 (RVALIPFFVLAFYLPFVWAPLLCAL). The Periplasmic segment spans residues 38–60 (IFVFAAVTDWFDGFLARRWKQTT). The chain crosses the membrane as a helical span at residues 61–81 (RFGAFLDPVADKVMVAVALVL). Topologically, residues 82-86 (VAEYY) are cytoplasmic. A helical membrane pass occupies residues 87-107 (HSWWITLPAATMIAREIIISA). Residues 108-145 (LREWMAEIGKRSSVAVSWIGKVKTTAQMMALFALLWRP) are Periplasmic-facing. The chain crosses the membrane as a helical span at residues 146 to 168 (ERIVEGIGVAALYIAAVLTFWSM). The Cytoplasmic portion of the chain corresponds to 169–181 (FQYLNAARHDLLE).

This sequence belongs to the CDP-alcohol phosphatidyltransferase class-I family.

The protein localises to the cell inner membrane. It carries out the reaction a CDP-1,2-diacyl-sn-glycerol + sn-glycerol 3-phosphate = a 1,2-diacyl-sn-glycero-3-phospho-(1'-sn-glycero-3'-phosphate) + CMP + H(+). The protein operates within phospholipid metabolism; phosphatidylglycerol biosynthesis; phosphatidylglycerol from CDP-diacylglycerol: step 1/2. Functionally, catalyzes the conversion of cytidine diphosphate diacylglycerol (CDP-DG) and glycerol 3-phosphate into phosphatidylglycerol. Essential for the synthesis of anionic phospholipids, thereby playing a role in balancing the ratio of zwitterionic and anionic phospholipids, which is thought to be important for normal membrane function. This chain is CDP-diacylglycerol--glycerol-3-phosphate 3-phosphatidyltransferase, found in Pectobacterium atrosepticum (strain SCRI 1043 / ATCC BAA-672) (Erwinia carotovora subsp. atroseptica).